The chain runs to 179 residues: Inner membrane-spanning protein YciB (179 aa).

The next 5 helical transmembrane spans lie at 22-42, 50-70, 76-96, 121-141, and 149-169; these read IYAA…YSWV, MALI…FFHN, WKVT…QWVM, LAWA…AFWL, and FKVF…GIYI.

Belongs to the YciB family.

Its subcellular location is the cell inner membrane. In terms of biological role, plays a role in cell envelope biogenesis, maintenance of cell envelope integrity and membrane homeostasis. The sequence is that of Inner membrane-spanning protein YciB from Shigella boydii serotype 18 (strain CDC 3083-94 / BS512).